The following is a 403-amino-acid chain: Coenzyme A biosynthesis bifunctional protein CoaBC (403 aa).

The interval M1–R197 is phosphopantothenoylcysteine decarboxylase. Residues V198–L403 are phosphopantothenate--cysteine ligase. Positions 287, 297, and 330 each coordinate CTP.

It in the N-terminal section; belongs to the HFCD (homo-oligomeric flavin containing Cys decarboxylase) superfamily. The protein in the C-terminal section; belongs to the PPC synthetase family. The cofactor is Mg(2+). Requires FMN as cofactor.

It carries out the reaction N-[(R)-4-phosphopantothenoyl]-L-cysteine + H(+) = (R)-4'-phosphopantetheine + CO2. The catalysed reaction is (R)-4'-phosphopantothenate + L-cysteine + CTP = N-[(R)-4-phosphopantothenoyl]-L-cysteine + CMP + diphosphate + H(+). Its pathway is cofactor biosynthesis; coenzyme A biosynthesis. Functionally, catalyzes two sequential steps in the biosynthesis of coenzyme A. In the first step cysteine is conjugated to 4'-phosphopantothenate to form 4-phosphopantothenoylcysteine. In the second step the latter compound is decarboxylated to form 4'-phosphopantotheine. This is Coenzyme A biosynthesis bifunctional protein CoaBC from Thermococcus kodakarensis (strain ATCC BAA-918 / JCM 12380 / KOD1) (Pyrococcus kodakaraensis (strain KOD1)).